Here is a 387-residue protein sequence, read N- to C-terminus: Bifunctional chorismate mutase/prephenate dehydratase (387 aa).

The Chorismate mutase domain occupies 1-92 (MNPDNPLLAL…DSVLTQQALL (92 aa)). Residues Arg11, Arg28, Lys39, Asp48, Glu52, Ser84, and Gln88 each contribute to the substrate site. The Prephenate dehydratase domain maps to 105–285 (RIAFLGPKGS…NHTRFIVLAR (181 aa)). The region spanning 299–376 (TLIMATGQQA…RSLKVLGCYP (78 aa)) is the ACT domain.

It localises to the cytoplasm. The catalysed reaction is chorismate = prephenate. It catalyses the reaction prephenate + H(+) = 3-phenylpyruvate + CO2 + H2O. It participates in amino-acid biosynthesis; L-phenylalanine biosynthesis; phenylpyruvate from prephenate: step 1/1. The protein operates within metabolic intermediate biosynthesis; prephenate biosynthesis; prephenate from chorismate: step 1/1. In terms of biological role, catalyzes the Claisen rearrangement of chorismate to prephenate and the decarboxylation/dehydration of prephenate to phenylpyruvate. The sequence is that of Bifunctional chorismate mutase/prephenate dehydratase (pheA) from Enterobacter agglomerans (Erwinia herbicola).